A 367-amino-acid polypeptide reads, in one-letter code: Biotin--protein ligase 1, chloroplastic (367 aa).

Residues methionine 1 to serine 37 constitute a chloroplast transit peptide. Residues isoleucine 105–methionine 289 enclose the BPL/LPL catalytic domain. Biotin contacts are provided by residues serine 122 to histidine 124, glutamine 145, arginine 149 to arginine 151, and lysine 220.

This sequence belongs to the biotin--protein ligase family. Expressed in roots, leaves, stems, flowers, siliques and seeds.

The protein resides in the plastid. The protein localises to the chloroplast. It is found in the cytoplasm. It localises to the cytosol. It catalyses the reaction apo-[3-methylcrotonoyl-CoA:carbon-dioxide ligase (ADP-forming)] + biotin + ATP = holo-[3-methylcrotonoyl-CoA:carbon-dioxide ligase (ADP-forming)] + AMP + diphosphate + H(+). The enzyme catalyses biotin + L-lysyl-[protein] + ATP = N(6)-biotinyl-L-lysyl-[protein] + AMP + diphosphate + H(+). Functionally, plays a major role in biotin-dependent carboxylase biotinylation. Catalyzes the addition of biotin to the biotin carboxyl carrier protein (BCCP) subunit of acetyl-CoA carboxylase. Can also biotinylate methylcrotonyl-CoA carboxylase. Is responsible for most, if not all, biotin--protein ligase activity in Arabidopsis. Is essential for plant viability and required for ovule development. The polypeptide is Biotin--protein ligase 1, chloroplastic (Arabidopsis thaliana (Mouse-ear cress)).